Consider the following 526-residue polypeptide: MSAKAEYLQQEDFLHRSNKLQEISDLGINPYPYEFPGTSSVEEIKNEFSSQSLGNSEDATNKNTPKVKISGRMVLFRSMGKNAFAQILDNDQKIQVMFNRDFSSVAGLPEDAEITPIKFIEKKLDLGDILGIEGYLFFTHSGELTILVETVTLLGKALISLPDKHAGLSDKETRYRKRWLDLICSDEVRQTFLKRSRIIKLIRQYMDAQDFIEVETPILQNIYGGAEATPFVTTLNALHSDMFLRISLEIALKKILVGGTPRVYEIGKVFRNEGIDRTHNPEFTMIEAYAMNIDYHSVMVYVENLIEYLVGELNNGSTVLTYSHLKQGPQTIDFKAPWIRMTMKDSIKTYGGVDVDLHGDHELRNILKERSSLPEESYATAPRGLLIAALFDELVCDKLIAPHHITDHPLETTPLCKSLRSGEEDYVERFESFCLGKELCNAYSELTDPMRQRMLLEKQMEKKALDPDSEYHPIDEEFLEALCQGMPPAGGFGIGIDRLVMILTDSASIRDVLYFPVMRRLESEND.

2 residues coordinate Mg(2+): E431 and E438.

The protein belongs to the class-II aminoacyl-tRNA synthetase family. In terms of assembly, homodimer. The cofactor is Mg(2+).

It localises to the cytoplasm. It carries out the reaction tRNA(Lys) + L-lysine + ATP = L-lysyl-tRNA(Lys) + AMP + diphosphate. The protein is Lysine--tRNA ligase of Chlamydia felis (strain Fe/C-56) (Chlamydophila felis).